A 199-amino-acid polypeptide reads, in one-letter code: Small ribosomal subunit protein uS2 (199 aa).

Belongs to the universal ribosomal protein uS2 family.

The chain is Small ribosomal subunit protein uS2 (rps2) from Thermoplasma acidophilum (strain ATCC 25905 / DSM 1728 / JCM 9062 / NBRC 15155 / AMRC-C165).